A 215-amino-acid polypeptide reads, in one-letter code: MPQTLADMRRDYSRSGLCEAEAPLEPFSLFHQWFAEAMKTEQLPVEPNAMSLATVDGNGRPHCRVLLLKGVDERGFTFFSNYESAKGQQLRARPFAAMTFFWPTLERQVRIEGEVEKVSSQESDAYFQVRPLGSRLGAWASPQSRVIRDRTELEELLALTEKRFLDQAPHCPGHWGGYRLLPDRIEFWQGRASRLHDRLNYRLEKGGWVRERLAP.

Residues 9 to 12 (RRDY) and lysine 69 each bind substrate. Residues 64-69 (RVLLLK), 79-80 (FS), lysine 86, and glutamine 108 each bind FMN. 3 residues coordinate substrate: tyrosine 126, arginine 130, and serine 134. FMN-binding positions include 143–144 (QS) and tryptophan 188. 194–196 (RLH) contacts substrate. Position 198 (arginine 198) interacts with FMN.

The protein belongs to the pyridoxamine 5'-phosphate oxidase family. Homodimer. Requires FMN as cofactor.

It carries out the reaction pyridoxamine 5'-phosphate + O2 + H2O = pyridoxal 5'-phosphate + H2O2 + NH4(+). The catalysed reaction is pyridoxine 5'-phosphate + O2 = pyridoxal 5'-phosphate + H2O2. The protein operates within cofactor metabolism; pyridoxal 5'-phosphate salvage; pyridoxal 5'-phosphate from pyridoxamine 5'-phosphate: step 1/1. It functions in the pathway cofactor metabolism; pyridoxal 5'-phosphate salvage; pyridoxal 5'-phosphate from pyridoxine 5'-phosphate: step 1/1. Catalyzes the oxidation of either pyridoxine 5'-phosphate (PNP) or pyridoxamine 5'-phosphate (PMP) into pyridoxal 5'-phosphate (PLP). This Azotobacter vinelandii (strain DJ / ATCC BAA-1303) protein is Pyridoxine/pyridoxamine 5'-phosphate oxidase.